A 110-amino-acid chain; its full sequence is tRNA-binding protein YgjH (110 aa).

Positions 8-110 (DFARLEMRVG…RMMPAGVRVV (103 aa)) constitute a tRNA-binding domain.

Homodimer.

This Escherichia coli (strain K12) protein is tRNA-binding protein YgjH (ygjH).